We begin with the raw amino-acid sequence, 281 residues long: Phosphatidylglycerol--prolipoprotein diacylglyceryl transferase (281 aa).

Helical transmembrane passes span Val23–Trp43, Phe71–Tyr91, Trp107–Phe127, and Ile133–Val153. Arg154 is an a 1,2-diacyl-sn-glycero-3-phospho-(1'-sn-glycerol) binding site. 3 helical membrane-spanning segments follow: residues Leu189–Val209, Gly217–Phe237, and Leu247–Leu267.

Belongs to the Lgt family.

The protein localises to the cell inner membrane. The enzyme catalyses L-cysteinyl-[prolipoprotein] + a 1,2-diacyl-sn-glycero-3-phospho-(1'-sn-glycerol) = an S-1,2-diacyl-sn-glyceryl-L-cysteinyl-[prolipoprotein] + sn-glycerol 1-phosphate + H(+). It participates in protein modification; lipoprotein biosynthesis (diacylglyceryl transfer). Catalyzes the transfer of the diacylglyceryl group from phosphatidylglycerol to the sulfhydryl group of the N-terminal cysteine of a prolipoprotein, the first step in the formation of mature lipoproteins. The chain is Phosphatidylglycerol--prolipoprotein diacylglyceryl transferase from Brucella anthropi (strain ATCC 49188 / DSM 6882 / CCUG 24695 / JCM 21032 / LMG 3331 / NBRC 15819 / NCTC 12168 / Alc 37) (Ochrobactrum anthropi).